The primary structure comprises 772 residues: DnaJ homolog subfamily C member 16 (772 aa).

A signal peptide spans 1–25 (MELKRLGVSWRFLMVLVLILQSLSA). Over 26-533 (LDFDPYRVLG…ESLLHSNWRE (508 aa)) the chain is Cytoplasmic. One can recognise a J domain in the interval 29–93 (DPYRVLGVSR…EKRTNYDHYG (65 aa)). The region spanning 119–245 (FDESFFHFPF…LRQFVESLLP (127 aa)) is the Thioredoxin domain. A helical; Anchor for type IV membrane protein membrane pass occupies residues 534–554 (MMPLLSLIFSALFILFGTVMV). Over 555–772 (QAFSDSNEER…FYIPSWPELD (218 aa)) the chain is Extracellular. The tract at residues 560–591 (SNEERESHPADKEEVPEKAGKTEPSFTKESSS) is disordered. Positions 561–580 (NEERESHPADKEEVPEKAGK) are enriched in basic and acidic residues. N-linked (GlcNAc...) asparagine glycosylation is present at asparagine 629.

The protein localises to the endoplasmic reticulum membrane. In terms of biological role, plays an important role in regulating the size of autophagosomes during the formation process. The sequence is that of DnaJ homolog subfamily C member 16 (Dnajc16) from Mus musculus (Mouse).